The following is a 480-amino-acid chain: UDP-N-acetylmuramoylalanine--D-glutamate ligase (480 aa).

120–126 (GTNGKTT) is an ATP binding site.

The protein belongs to the MurCDEF family.

It is found in the cytoplasm. The catalysed reaction is UDP-N-acetyl-alpha-D-muramoyl-L-alanine + D-glutamate + ATP = UDP-N-acetyl-alpha-D-muramoyl-L-alanyl-D-glutamate + ADP + phosphate + H(+). It participates in cell wall biogenesis; peptidoglycan biosynthesis. Functionally, cell wall formation. Catalyzes the addition of glutamate to the nucleotide precursor UDP-N-acetylmuramoyl-L-alanine (UMA). The chain is UDP-N-acetylmuramoylalanine--D-glutamate ligase from Nocardia farcinica (strain IFM 10152).